Consider the following 417-residue polypeptide: NADH-quinone oxidoreductase subunit D (417 aa).

Belongs to the complex I 49 kDa subunit family. In terms of assembly, NDH-1 is composed of 14 different subunits. Subunits NuoB, C, D, E, F, and G constitute the peripheral sector of the complex.

It localises to the cell inner membrane. The catalysed reaction is a quinone + NADH + 5 H(+)(in) = a quinol + NAD(+) + 4 H(+)(out). In terms of biological role, NDH-1 shuttles electrons from NADH, via FMN and iron-sulfur (Fe-S) centers, to quinones in the respiratory chain. The immediate electron acceptor for the enzyme in this species is believed to be ubiquinone. Couples the redox reaction to proton translocation (for every two electrons transferred, four hydrogen ions are translocated across the cytoplasmic membrane), and thus conserves the redox energy in a proton gradient. The sequence is that of NADH-quinone oxidoreductase subunit D from Nitrosomonas europaea (strain ATCC 19718 / CIP 103999 / KCTC 2705 / NBRC 14298).